The primary structure comprises 131 residues: D-ribose pyranase (131 aa).

The Proton donor role is filled by H20. Residues D28, H98, and 120-122 (YAN) each bind substrate.

It belongs to the RbsD / FucU family. RbsD subfamily. In terms of assembly, homodecamer.

It localises to the cytoplasm. The catalysed reaction is beta-D-ribopyranose = beta-D-ribofuranose. The protein operates within carbohydrate metabolism; D-ribose degradation; D-ribose 5-phosphate from beta-D-ribopyranose: step 1/2. Its function is as follows. Catalyzes the interconversion of beta-pyran and beta-furan forms of D-ribose. This is D-ribose pyranase from Clostridium perfringens (strain SM101 / Type A).